The primary structure comprises 227 residues: Ubiquitin domain-containing protein 1 (227 aa).

Residues 1–36 form a disordered region; it reads MGNCVGRQRRERPTAPGHPRKRAGRNEPLKKERLKW. Over residues 24–36 the composition is skewed to basic and acidic residues; it reads GRNEPLKKERLKW. The 76-residue stretch at 149 to 224 folds into the Ubiquitin-like domain; the sequence is FPLKVRLSTG…IQVIINQPPP (76 aa).

In terms of assembly, interacts with UBTD1.

In terms of biological role, may be involved in the regulation of cellular senescence through a positive feedback loop with TP53. Is a TP53 downstream target gene that increases the stability of TP53 protein by promoting the ubiquitination and degradation of MDM2. This chain is Ubiquitin domain-containing protein 1 (UBTD1), found in Bos taurus (Bovine).